The chain runs to 422 residues: Histidine--tRNA ligase (422 aa).

This sequence belongs to the class-II aminoacyl-tRNA synthetase family. As to quaternary structure, homodimer.

It localises to the cytoplasm. The catalysed reaction is tRNA(His) + L-histidine + ATP = L-histidyl-tRNA(His) + AMP + diphosphate + H(+). The sequence is that of Histidine--tRNA ligase from Vibrio parahaemolyticus serotype O3:K6 (strain RIMD 2210633).